The primary structure comprises 252 residues: Protein PF0476 (252 aa).

Belongs to the CinA family.

The sequence is that of Protein PF0476 from Pyrococcus furiosus (strain ATCC 43587 / DSM 3638 / JCM 8422 / Vc1).